Reading from the N-terminus, the 505-residue chain is ATP synthase subunit alpha, chloroplastic (505 aa).

170 to 177 (GDRQTGKT) lines the ATP pocket.

Belongs to the ATPase alpha/beta chains family. In terms of assembly, F-type ATPases have 2 components, CF(1) - the catalytic core - and CF(0) - the membrane proton channel. CF(1) has five subunits: alpha(3), beta(3), gamma(1), delta(1), epsilon(1). CF(0) has four main subunits: a, b, b' and c.

It localises to the plastid. It is found in the chloroplast thylakoid membrane. The catalysed reaction is ATP + H2O + 4 H(+)(in) = ADP + phosphate + 5 H(+)(out). Its function is as follows. Produces ATP from ADP in the presence of a proton gradient across the membrane. The alpha chain is a regulatory subunit. This is ATP synthase subunit alpha, chloroplastic from Oenothera biennis (German evening primrose).